Here is a 78-residue protein sequence, read N- to C-terminus: Ferredoxin oxidoreductase 2 subunit ForD (78 aa).

2 4Fe-4S ferredoxin-type domains span residues 3–35 and 37–66; these read FVAD…FKAS and NSAW…HCIE. C12, C17, C20, C24, C46, C49, C52, and C56 together coordinate [4Fe-4S] cluster.

Heterotetramer of one alpha, one beta, one delta and one gamma chain. [4Fe-4S] cluster is required as a cofactor.

The polypeptide is Ferredoxin oxidoreductase 2 subunit ForD (forD2) (Aquifex aeolicus (strain VF5)).